The primary structure comprises 262 residues: Cytochrome c oxidase subunit 3 (262 aa).

The next 7 membrane-spanning stretches (helical) occupy residues 16–36 (PWPL…VQWF), 42–59 (TLFL…YQWW), 83–103 (GMIL…WAFF), 128–148 (FQIP…VTWA), 163–183 (SLFF…YEYI), 198–218 (FFVA…FLLI), and 240–260 (AWYW…IYWW).

This sequence belongs to the cytochrome c oxidase subunit 3 family. In terms of assembly, component of the cytochrome c oxidase (complex IV, CIV), a multisubunit enzyme composed of a catalytic core of 3 subunits and several supernumerary subunits. The complex exists as a monomer or a dimer and forms supercomplexes (SCs) in the inner mitochondrial membrane with ubiquinol-cytochrome c oxidoreductase (cytochrome b-c1 complex, complex III, CIII).

The protein resides in the mitochondrion inner membrane. The catalysed reaction is 4 Fe(II)-[cytochrome c] + O2 + 8 H(+)(in) = 4 Fe(III)-[cytochrome c] + 2 H2O + 4 H(+)(out). Component of the cytochrome c oxidase, the last enzyme in the mitochondrial electron transport chain which drives oxidative phosphorylation. The respiratory chain contains 3 multisubunit complexes succinate dehydrogenase (complex II, CII), ubiquinol-cytochrome c oxidoreductase (cytochrome b-c1 complex, complex III, CIII) and cytochrome c oxidase (complex IV, CIV), that cooperate to transfer electrons derived from NADH and succinate to molecular oxygen, creating an electrochemical gradient over the inner membrane that drives transmembrane transport and the ATP synthase. Cytochrome c oxidase is the component of the respiratory chain that catalyzes the reduction of oxygen to water. Electrons originating from reduced cytochrome c in the intermembrane space (IMS) are transferred via the dinuclear copper A center (CU(A)) of subunit 2 and heme A of subunit 1 to the active site in subunit 1, a binuclear center (BNC) formed by heme A3 and copper B (CU(B)). The BNC reduces molecular oxygen to 2 water molecules using 4 electrons from cytochrome c in the IMS and 4 protons from the mitochondrial matrix. The polypeptide is Cytochrome c oxidase subunit 3 (Aedes aegypti (Yellowfever mosquito)).